A 236-amino-acid chain; its full sequence is Probable transcriptional regulatory protein UU295 (236 aa).

It belongs to the TACO1 family.

The protein resides in the cytoplasm. This Ureaplasma parvum serovar 3 (strain ATCC 700970) protein is Probable transcriptional regulatory protein UU295.